We begin with the raw amino-acid sequence, 227 residues long: tRNA (guanine-N(7)-)-methyltransferase (227 aa).

The S-adenosyl-L-methionine site is built by Glu-60, Glu-85, Asp-112, and Asp-135. Asp-135 is a catalytic residue. Residues Lys-139, Asp-171, and 206-209 (TKFE) each bind substrate.

It belongs to the class I-like SAM-binding methyltransferase superfamily. TrmB family.

The catalysed reaction is guanosine(46) in tRNA + S-adenosyl-L-methionine = N(7)-methylguanosine(46) in tRNA + S-adenosyl-L-homocysteine. It functions in the pathway tRNA modification; N(7)-methylguanine-tRNA biosynthesis. Functionally, catalyzes the formation of N(7)-methylguanine at position 46 (m7G46) in tRNA. The polypeptide is tRNA (guanine-N(7)-)-methyltransferase (Thiobacillus denitrificans (strain ATCC 25259 / T1)).